Consider the following 1098-residue polypeptide: MQLNYDYFTKPECKILLPKVQTNPRYKNFTQLYYTVGDEEQFWVETTLKPFLEKDGDASPQSQQRVASQENVWRNLETFVPWQGYENISAAEVEPTFQYMFNRFKKGIYVSIAGGRLQSFVPFSKANFTNDWADRIQIDPKYGSFLNFLKAQHDLNNKWNGTTYKWNPNKVCPDPRYWYANNCIVRYENPISESHSNVAQIKSMLLELVEKRHISDVKFFINRRDFPLLTRDGTEAYDNIFGDETPVPEQYRHRKWLPILSMCTSERFADIAIPTHEDWSRVKSDEGIYFPPVCRNYTFQFVHTWSDKVAKAVFRGSNTGCGWNETNNVRLKLARLGTVRPDLLDAGITNWNLRVRVSKHSPYLQIPDPGTLTAVDRLSPHQQSQYKFIVHVEGHVSAFRLSLELGMKSCILLVQSLHGWKMWYSDLLKPWVHYVPVRPDLSDLFDRIEWCRANDAQCRAMAENAYQFYRTHLDKESILDHLQHTLNRLARQFTAQEPPTDPLLLQMEWERQALAQLAPQKTSALTGQFPPSPFRNWGSLCGFEKFVTQALDPRMEMGSVAVPGKTIFKSKTTKVTLYQLGGTWFVAKRTINLMKKLEFLHEGFIGKMVLNNLVKWCPNYLYTFHYRDEPFISYTWKDYNSLEGGSRVFNPTVKESTVMQEFIDGPTLQAFLQTCTFKSYFEVLFSLCCALLLGQSLCGFVHHDLKPWNVVVQVLPEPTVVEYTVRPDPNSGEKFLTWKIKTRYIPVMIDYGKSHVVYRNVHYGVADQFATNWSLDLQTLLVSTLNEWMLRYHQSEGKENPSPDYGDLVYTANFLSTRPLKTVRDLAGWTLANKKFQTQAPLDFKIFPSNAPVIEDFLKHMAPLTKKYKISFGKGAATAAGWSFNPRQIVDLAFSLDPDQQANAWVQVPRRIYRNPLPAATNKLVATFIAQQLWNGLVVPKLGFVDWAQSENLNRSVAESIWNEYDKMEKFLTQHYWSKIDKMTPAPLTIEPYPDAFQTLVQLRLKPTRSLFLSSDKLQRLRRNIAPQYDAPAFPDYDQYRGMILDMVKDSGPFKLTPDLAAFYLDNLKPLFDEKIMEAVTNLETIKFYTQPTTKSKF.

This is an uncharacterized protein from Invertebrate iridescent virus 3 (IIV-3).